The sequence spans 72 residues: Conotoxin Gla(2)-TxVI/A (72 aa).

The first 19 residues, 1 to 19, serve as a signal peptide directing secretion; sequence MQKLIILLLVAAVLMSTQA. Positions 20 to 44 are excised as a propeptide; sequence LFQEKRPMKKIDFLSKGKTDAEKQQ. Disulfide bonds link Cys48/Cys62, Cys55/Cys66, and Cys61/Cys70. At Glu56 the chain carries 4-carboxyglutamate. Pro58 carries the 4-hydroxyproline modification. Ser71 is subject to Serine amide.

Belongs to the conotoxin O2 superfamily. Brominated at one of the Trp residues. In terms of tissue distribution, expressed by the venom duct.

Its subcellular location is the secreted. This Conus textile (Cloth-of-gold cone) protein is Conotoxin Gla(2)-TxVI/A.